The following is a 212-amino-acid chain: Phosphatidylserine decarboxylase proenzyme (212 aa).

The active-site Schiff-base intermediate with substrate; via pyruvic acid is Ser182. At Ser182 the chain carries Pyruvic acid (Ser); by autocatalysis.

Belongs to the phosphatidylserine decarboxylase family. PSD-A subfamily. Heterodimer of a large membrane-associated beta subunit and a small pyruvoyl-containing alpha subunit. It depends on pyruvate as a cofactor. In terms of processing, is synthesized initially as an inactive proenzyme. Formation of the active enzyme involves a self-maturation process in which the active site pyruvoyl group is generated from an internal serine residue via an autocatalytic post-translational modification. Two non-identical subunits are generated from the proenzyme in this reaction, and the pyruvate is formed at the N-terminus of the alpha chain, which is derived from the carboxyl end of the proenzyme. The post-translation cleavage follows an unusual pathway, termed non-hydrolytic serinolysis, in which the side chain hydroxyl group of the serine supplies its oxygen atom to form the C-terminus of the beta chain, while the remainder of the serine residue undergoes an oxidative deamination to produce ammonia and the pyruvoyl prosthetic group on the alpha chain.

Its subcellular location is the cell membrane. The enzyme catalyses a 1,2-diacyl-sn-glycero-3-phospho-L-serine + H(+) = a 1,2-diacyl-sn-glycero-3-phosphoethanolamine + CO2. Its pathway is phospholipid metabolism; phosphatidylethanolamine biosynthesis; phosphatidylethanolamine from CDP-diacylglycerol: step 2/2. In terms of biological role, catalyzes the formation of phosphatidylethanolamine (PtdEtn) from phosphatidylserine (PtdSer). In Chlorobium phaeobacteroides (strain DSM 266 / SMG 266 / 2430), this protein is Phosphatidylserine decarboxylase proenzyme.